Reading from the N-terminus, the 319-residue chain is MTYARIQGVGSYIPQQILSNADLEKMVNTTDEWIMQRVGVRERHVIANSPDNTTTMAVDAAKRAIEMAGIDSAVIDMIIVGTATAEYYFPSTACLVQKHLNLREDIPAFDINAACAGFVYALSIADQYIRNGGAKHILVIGVDSLTKVVDWKDRSTCILFGDGAGAVILQAHKEPGILNTILHANGDYSDLITAKSGVWERESVPHLHMYGKEVFKLAVTKLGEIVDEIIEKSGLKQSDIDWLIPHQANLRIIEATAKRLGLPRERVILTIEQHGNTSAASIPLALDAAVRAGKIKRGDTLLLEAFGAGLAWGAALLKL.

Catalysis depends on residues cysteine 115 and histidine 246. The ACP-binding stretch occupies residues 247 to 251; it reads QANLR. Asparagine 276 is a catalytic residue.

It belongs to the thiolase-like superfamily. FabH family. As to quaternary structure, homodimer.

It localises to the cytoplasm. It carries out the reaction malonyl-[ACP] + acetyl-CoA + H(+) = 3-oxobutanoyl-[ACP] + CO2 + CoA. The protein operates within lipid metabolism; fatty acid biosynthesis. Its function is as follows. Catalyzes the condensation reaction of fatty acid synthesis by the addition to an acyl acceptor of two carbons from malonyl-ACP. Catalyzes the first condensation reaction which initiates fatty acid synthesis and may therefore play a role in governing the total rate of fatty acid production. Possesses both acetoacetyl-ACP synthase and acetyl transacylase activities. Its substrate specificity determines the biosynthesis of branched-chain and/or straight-chain of fatty acids. This Coxiella burnetii (strain CbuK_Q154) (Coxiella burnetii (strain Q154)) protein is Beta-ketoacyl-[acyl-carrier-protein] synthase III.